A 94-amino-acid polypeptide reads, in one-letter code: UPF0358 protein Bcer98_2651 (94 aa).

The protein belongs to the UPF0358 family.

This chain is UPF0358 protein Bcer98_2651, found in Bacillus cytotoxicus (strain DSM 22905 / CIP 110041 / 391-98 / NVH 391-98).